Reading from the N-terminus, the 178-residue chain is Acireductone dioxygenase (178 aa).

H87, H89, E93, and H132 together coordinate Fe(2+). 4 residues coordinate Ni(2+): H87, H89, E93, and H132.

Belongs to the acireductone dioxygenase (ARD) family. Fe(2+) is required as a cofactor. The cofactor is Ni(2+).

The protein localises to the cytoplasm. It is found in the nucleus. The enzyme catalyses 1,2-dihydroxy-5-(methylsulfanyl)pent-1-en-3-one + O2 = 4-methylsulfanyl-2-oxobutanoate + formate + 2 H(+). It carries out the reaction 1,2-dihydroxy-5-(methylsulfanyl)pent-1-en-3-one + O2 = 3-(methylsulfanyl)propanoate + CO + formate + 2 H(+). It participates in amino-acid biosynthesis; L-methionine biosynthesis via salvage pathway; L-methionine from S-methyl-5-thio-alpha-D-ribose 1-phosphate: step 5/6. Functionally, catalyzes 2 different reactions between oxygen and the acireductone 1,2-dihydroxy-3-keto-5-methylthiopentene (DHK-MTPene) depending upon the metal bound in the active site. Fe-containing acireductone dioxygenase (Fe-ARD) produces formate and 2-keto-4-methylthiobutyrate (KMTB), the alpha-ketoacid precursor of methionine in the methionine recycle pathway. Ni-containing acireductone dioxygenase (Ni-ARD) produces methylthiopropionate, carbon monoxide and formate, and does not lie on the methionine recycle pathway. The protein is Acireductone dioxygenase of Candida albicans (strain SC5314 / ATCC MYA-2876) (Yeast).